The following is a 206-amino-acid chain: Transmembrane emp24 domain-containing protein bai (206 aa).

A signal peptide spans 1 to 20 (MARAALIVCLLMACAWSSHA). Residues 21–172 (VMFKLSPNTQ…RDTNEKTNSR (152 aa)) lie on the Lumenal side of the membrane. The 111-residue stretch at 30–140 (QKCLKEDIQA…LKPLEVDLKR (111 aa)) folds into the GOLD domain. The chain crosses the membrane as a helical span at residues 173 to 193 (VLFFSIFSMCCLLGLATWQVL). Topologically, residues 194-206 (YLRRYFKAKKLIE) are cytoplasmic.

The protein belongs to the EMP24/GP25L family.

The protein resides in the membrane. In terms of biological role, eca and bai are essential, though not redundant, for dorsoventral patterning of the embryo. Specifically required during early embryogenesis for the activity of maternal tkv, while the zygotic tkv is not affected. The sequence is that of Transmembrane emp24 domain-containing protein bai from Drosophila erecta (Fruit fly).